We begin with the raw amino-acid sequence, 530 residues long: T-complex protein 1 subunit delta (530 aa).

Over residues 1-13 the composition is skewed to polar residues; that stretch reads MVSQAKQPSNATF. The tract at residues 1–20 is disordered; sequence MVSQAKQPSNATFKNREKPQ.

It belongs to the TCP-1 chaperonin family. Heterooligomeric complex of about 850 to 900 kDa that forms two stacked rings, 12 to 16 nm in diameter.

Its subcellular location is the cytoplasm. Its function is as follows. Molecular chaperone; assists the folding of proteins upon ATP hydrolysis. Known to play a role, in vitro, in the folding of actin and tubulin. In Kluyveromyces lactis (strain ATCC 8585 / CBS 2359 / DSM 70799 / NBRC 1267 / NRRL Y-1140 / WM37) (Yeast), this protein is T-complex protein 1 subunit delta (CCT4).